Reading from the N-terminus, the 981-residue chain is Beta-glucuronidase (981 aa).

Glutamate 500 (nucleophile) is an active-site residue. The Mg(2+) site is built by asparagine 561, tryptophan 562, isoleucine 563, serine 581, and glutamate 583.

It belongs to the glycosyl hydrolase 2 family.

It is found in the periplasm. The catalysed reaction is a beta-D-glucuronoside + H2O = D-glucuronate + an alcohol. Its function is as follows. Beta-glucuronidase involved in ulvan degradation. Ulvan is the main polysaccharide component of the Ulvales (green seaweed) cell wall. It is composed of disaccharide building blocks comprising 3-sulfated rhamnose (Rha3S) linked to D-glucuronic acid (GlcA), L-iduronic acid (IduA), or D-xylose (Xyl). Beta-glucuronidase removes GlcA side chains present on some O2 residues of Rha3S. Can remove the GlcA side chains from polymeric ulvan or from smaller oligomers. This chain is Beta-glucuronidase, found in Formosa agariphila (strain DSM 15362 / KCTC 12365 / LMG 23005 / KMM 3901 / M-2Alg 35-1).